The following is a 343-amino-acid chain: tRNA N6-adenosine threonylcarbamoyltransferase (343 aa).

His-111 and His-115 together coordinate Fe cation. Substrate contacts are provided by residues 134–138 (LVSGG), Asp-167, Gly-180, and Asn-276. Asp-304 is a Fe cation binding site.

It belongs to the KAE1 / TsaD family. The cofactor is Fe(2+).

It localises to the cytoplasm. It catalyses the reaction L-threonylcarbamoyladenylate + adenosine(37) in tRNA = N(6)-L-threonylcarbamoyladenosine(37) in tRNA + AMP + H(+). Functionally, required for the formation of a threonylcarbamoyl group on adenosine at position 37 (t(6)A37) in tRNAs that read codons beginning with adenine. Is involved in the transfer of the threonylcarbamoyl moiety of threonylcarbamoyl-AMP (TC-AMP) to the N6 group of A37, together with TsaE and TsaB. TsaD likely plays a direct catalytic role in this reaction. The sequence is that of tRNA N6-adenosine threonylcarbamoyltransferase from Hahella chejuensis (strain KCTC 2396).